The chain runs to 720 residues: Engulfment and cell motility protein 3 (720 aa).

Positions Glu307–Leu479 constitute an ELMO domain. Positions Leu541–Gly663 constitute a PH domain.

Probably interacts directly with the SH3-domain of DOCK1 via its SH3-binding site. Part of a complex with DOCK1 and RAC1. Interacts with ADGRB3.

The protein localises to the cytoplasm. Its function is as follows. Involved in cytoskeletal rearrangements required for phagocytosis of apoptotic cells and cell motility. Acts in association with DOCK1 and CRK. Was initially proposed to be required in complex with DOCK1 to activate Rac Rho small GTPases. May enhance the guanine nucleotide exchange factor (GEF) activity of DOCK1. The sequence is that of Engulfment and cell motility protein 3 (Elmo3) from Rattus norvegicus (Rat).